Consider the following 913-residue polypeptide: Chitin synthase 1 (913 aa).

Residues M1–S27 form a disordered region. Residues T237, E241, and D291 each contribute to the UDP-N-acetyl-alpha-D-glucosamine site. N-linked (GlcNAc...) asparagine glycosylation occurs at N420. Residue D496 is part of the active site. The N-linked (GlcNAc...) asparagine glycan is linked to N510. Transmembrane regions (helical) follow at residues W539–S559, Y581–F601, A625–L645, F658–F678, T684–L704, and I711–I731. A Conserved SWG motif motif is present at residues S741 to G743. Transmembrane regions (helical) follow at residues V800–S820 and M825–G845. N867 and N900 each carry an N-linked (GlcNAc...) asparagine glycan.

Belongs to the chitin synthase family. Class II subfamily. Homodimer. Requires Mn(2+) as cofactor.

The protein resides in the cell membrane. It carries out the reaction [(1-&gt;4)-N-acetyl-beta-D-glucosaminyl](n) + UDP-N-acetyl-alpha-D-glucosamine = [(1-&gt;4)-N-acetyl-beta-D-glucosaminyl](n+1) + UDP + H(+). With respect to regulation, the activity is inhibited by nikkomycin Z (NikZ). Its function is as follows. Polymerizes chitin, a structural polymer of the cell wall and septum, by transferring the sugar moiety of UDP-GlcNAc to the non-reducing end of the growing chitin polymer. Involved in mycelial growth, sporangial production, zoospore release and pathogenesis. The protein is Chitin synthase 1 of Phytophthora sojae (strain P6497) (Soybean stem and root rot agent).